Consider the following 272-residue polypeptide: Exosome complex component Rrp42 (272 aa).

The protein belongs to the RNase PH family. Rrp42 subfamily. In terms of assembly, component of the archaeal exosome complex. Forms a hexameric ring-like arrangement composed of 3 Rrp41-Rrp42 heterodimers. The hexameric ring associates with a trimer of Rrp4 and/or Csl4 subunits.

It localises to the cytoplasm. Functionally, non-catalytic component of the exosome, which is a complex involved in RNA degradation. Contributes to the structuring of the Rrp41 active site. The protein is Exosome complex component Rrp42 of Thermococcus onnurineus (strain NA1).